The following is a 357-amino-acid chain: Protein RecA (357 aa).

67 to 74 (GPESSGKT) contributes to the ATP binding site.

The protein belongs to the RecA family.

It is found in the cytoplasm. Can catalyze the hydrolysis of ATP in the presence of single-stranded DNA, the ATP-dependent uptake of single-stranded DNA by duplex DNA, and the ATP-dependent hybridization of homologous single-stranded DNAs. It interacts with LexA causing its activation and leading to its autocatalytic cleavage. The sequence is that of Protein RecA from Shewanella oneidensis (strain ATCC 700550 / JCM 31522 / CIP 106686 / LMG 19005 / NCIMB 14063 / MR-1).